Consider the following 670-residue polypeptide: ATP synthase subunit alpha 2 (670 aa).

ATP is bound at residue 180–187; the sequence is GDRATGKT. The tract at residues 527 to 670 is disordered; it reads AEDAAGDIGG…DAEAEARHKR (144 aa). Residues 543-588 show a composition bias toward basic and acidic residues; that stretch reads ARGDADRDADHGANREVSREVSPEASREVSREVSREVSHEADRDAA. Low complexity predominate over residues 589 to 599; that stretch reads ADAARVAGRAP. Over residues 621-639 the composition is skewed to basic and acidic residues; it reads ADGDRASASRPRPDARGDA. Residues 640 to 661 show a composition bias toward low complexity; the sequence is ARTAPSPQGGAEVNVNAAANVD.

Belongs to the ATPase alpha/beta chains family. In terms of assembly, F-type ATPases have 2 components, CF(1) - the catalytic core - and CF(0) - the membrane proton channel. CF(1) has five subunits: alpha(3), beta(3), gamma(1), delta(1), epsilon(1). CF(0) has three main subunits: a(1), b(2) and c(9-12). The alpha and beta chains form an alternating ring which encloses part of the gamma chain. CF(1) is attached to CF(0) by a central stalk formed by the gamma and epsilon chains, while a peripheral stalk is formed by the delta and b chains.

Its subcellular location is the cell inner membrane. The enzyme catalyses ATP + H2O + 4 H(+)(in) = ADP + phosphate + 5 H(+)(out). Its function is as follows. Produces ATP from ADP in the presence of a proton gradient across the membrane. The alpha chain is a regulatory subunit. The sequence is that of ATP synthase subunit alpha 2 from Burkholderia pseudomallei (strain 668).